The chain runs to 104 residues: Large ribosomal subunit protein bL21 (104 aa).

Belongs to the bacterial ribosomal protein bL21 family. Part of the 50S ribosomal subunit. Contacts protein L20.

This protein binds to 23S rRNA in the presence of protein L20. This Alkalilimnicola ehrlichii (strain ATCC BAA-1101 / DSM 17681 / MLHE-1) protein is Large ribosomal subunit protein bL21.